The sequence spans 260 residues: tRNA pseudouridine synthase A (260 aa).

Asp-52 serves as the catalytic Nucleophile. Tyr-110 serves as a coordination point for substrate.

The protein belongs to the tRNA pseudouridine synthase TruA family. As to quaternary structure, homodimer.

The enzyme catalyses uridine(38/39/40) in tRNA = pseudouridine(38/39/40) in tRNA. Its function is as follows. Formation of pseudouridine at positions 38, 39 and 40 in the anticodon stem and loop of transfer RNAs. This is tRNA pseudouridine synthase A from Spiroplasma kunkelii.